Reading from the N-terminus, the 421-residue chain is 4-hydroxy-3-methylbut-2-en-1-yl diphosphate synthase (flavodoxin) (421 aa).

4 residues coordinate [4Fe-4S] cluster: Cys311, Cys314, Cys357, and Glu364.

It belongs to the IspG family. It depends on [4Fe-4S] cluster as a cofactor.

It carries out the reaction (2E)-4-hydroxy-3-methylbut-2-enyl diphosphate + oxidized [flavodoxin] + H2O + 2 H(+) = 2-C-methyl-D-erythritol 2,4-cyclic diphosphate + reduced [flavodoxin]. The protein operates within isoprenoid biosynthesis; isopentenyl diphosphate biosynthesis via DXP pathway; isopentenyl diphosphate from 1-deoxy-D-xylulose 5-phosphate: step 5/6. Its function is as follows. Converts 2C-methyl-D-erythritol 2,4-cyclodiphosphate (ME-2,4cPP) into 1-hydroxy-2-methyl-2-(E)-butenyl 4-diphosphate. The protein is 4-hydroxy-3-methylbut-2-en-1-yl diphosphate synthase (flavodoxin) of Xanthomonas campestris pv. campestris (strain 8004).